We begin with the raw amino-acid sequence, 72 residues long: Translation initiation factor IF-1 (72 aa).

Positions Met1–Arg72 constitute an S1-like domain.

It belongs to the IF-1 family. As to quaternary structure, component of the 30S ribosomal translation pre-initiation complex which assembles on the 30S ribosome in the order IF-2 and IF-3, IF-1 and N-formylmethionyl-tRNA(fMet); mRNA recruitment can occur at any time during PIC assembly.

The protein localises to the cytoplasm. Functionally, one of the essential components for the initiation of protein synthesis. Stabilizes the binding of IF-2 and IF-3 on the 30S subunit to which N-formylmethionyl-tRNA(fMet) subsequently binds. Helps modulate mRNA selection, yielding the 30S pre-initiation complex (PIC). Upon addition of the 50S ribosomal subunit IF-1, IF-2 and IF-3 are released leaving the mature 70S translation initiation complex. The sequence is that of Translation initiation factor IF-1 from Buchnera aphidicola subsp. Schizaphis graminum (strain Sg).